The chain runs to 394 residues: Argininosuccinate synthase (394 aa).

8 to 16 (AYSGGLDTS) contributes to the ATP binding site. L-citrulline is bound by residues Y86 and S91. G116 is a binding site for ATP. Positions 118, 122, and 123 each coordinate L-aspartate. N122 is an L-citrulline binding site. R126, S172, S181, E257, and Y269 together coordinate L-citrulline.

Belongs to the argininosuccinate synthase family. Type 1 subfamily. Homotetramer.

It is found in the cytoplasm. The enzyme catalyses L-citrulline + L-aspartate + ATP = 2-(N(omega)-L-arginino)succinate + AMP + diphosphate + H(+). The protein operates within amino-acid biosynthesis; L-arginine biosynthesis; L-arginine from L-ornithine and carbamoyl phosphate: step 2/3. This Methanosarcina acetivorans (strain ATCC 35395 / DSM 2834 / JCM 12185 / C2A) protein is Argininosuccinate synthase.